The chain runs to 166 residues: Putative peroxisomal peroxiredoxin (166 aa).

The region spanning 5 to 166 (FPEDVKFLYI…SGVDAVLAAL (162 aa)) is the Thioredoxin domain. Cysteine 56 (cysteine sulfenic acid (-SOH) intermediate) is an active-site residue.

It belongs to the peroxiredoxin family. Prx5 subfamily. In terms of assembly, homodimer; disulfide-linked, upon oxidation.

The catalysed reaction is a hydroperoxide + [protein]-dithiol = [protein]-disulfide + an alcohol + H2O. In terms of biological role, thiol-specific peroxidase that catalyzes the reduction of hydrogen peroxide and organic hydroperoxides to water and alcohols, respectively. Plays a role in cell protection against oxidative stress by detoxifying peroxides and as sensor of hydrogen peroxide-mediated signaling events. The polypeptide is Putative peroxisomal peroxiredoxin (Lipomyces kononenkoae (Yeast)).